The following is a 131-amino-acid chain: MAKRKQNVRSKRKVKKHVEVGVVHIRSTFNNTIITITDTQGNAISWATSGNLGFKGSRKSTPFAAQMAAETAAKVAMDNGMRTVEVNVKGPGAGREAAIRALQATGLEVTAIRDVTPVPHNGCRPPKRRRV.

This sequence belongs to the universal ribosomal protein uS11 family. In terms of assembly, part of the 30S ribosomal subunit. Interacts with proteins S7 and S18. Binds to IF-3.

In terms of biological role, located on the platform of the 30S subunit, it bridges several disparate RNA helices of the 16S rRNA. Forms part of the Shine-Dalgarno cleft in the 70S ribosome. The protein is Small ribosomal subunit protein uS11 of Exiguobacterium sp. (strain ATCC BAA-1283 / AT1b).